The following is a 147-amino-acid chain: Hemoglobin subunit epsilon-Y2 (147 aa).

Positions 3 to 147 constitute a Globin domain; sequence NFTAEEKTLI…VATALSHKYH (145 aa). Phosphoserine is present on serine 51. Heme b-binding residues include histidine 64 and histidine 93.

Belongs to the globin family. High expression in yolk sac blood islands, fetal liver, and embryonic erythrocytes. Very low levels in adult liver and spleen.

Functionally, hemoglobin epsilon chain is a beta-type chain found in early embryos. The chain is Hemoglobin subunit epsilon-Y2 (Hbb-y) from Mus musculus (Mouse).